The sequence spans 163 residues: NADH-quinone oxidoreductase subunit I (163 aa).

4Fe-4S ferredoxin-type domains are found at residues 53–83 and 94–123; these read LRRY…IEAG and TLYD…LTPE. The [4Fe-4S] cluster site is built by C63, C66, C69, C73, C103, C106, C109, and C113.

Belongs to the complex I 23 kDa subunit family. As to quaternary structure, NDH-1 is composed of 14 different subunits. Subunits NuoA, H, J, K, L, M, N constitute the membrane sector of the complex. The cofactor is [4Fe-4S] cluster.

It is found in the cell inner membrane. The catalysed reaction is a quinone + NADH + 5 H(+)(in) = a quinol + NAD(+) + 4 H(+)(out). Its function is as follows. NDH-1 shuttles electrons from NADH, via FMN and iron-sulfur (Fe-S) centers, to quinones in the respiratory chain. The immediate electron acceptor for the enzyme in this species is believed to be ubiquinone. Couples the redox reaction to proton translocation (for every two electrons transferred, four hydrogen ions are translocated across the cytoplasmic membrane), and thus conserves the redox energy in a proton gradient. The polypeptide is NADH-quinone oxidoreductase subunit I (Coxiella burnetii (strain Dugway 5J108-111)).